The sequence spans 284 residues: D-tagatose-1,6-bisphosphate aldolase subunit GatY (284 aa).

D82 serves as the catalytic Proton donor. 2 residues coordinate Zn(2+): H83 and H180. A dihydroxyacetone phosphate-binding site is contributed by G181. Residue H208 participates in Zn(2+) binding. Dihydroxyacetone phosphate is bound by residues 209–211 (GAS) and 230–233 (NVAT).

The protein belongs to the class II fructose-bisphosphate aldolase family. TagBP aldolase GatY subfamily. As to quaternary structure, forms a complex with GatZ. It depends on Zn(2+) as a cofactor.

The enzyme catalyses D-tagatofuranose 1,6-bisphosphate = D-glyceraldehyde 3-phosphate + dihydroxyacetone phosphate. The protein operates within carbohydrate metabolism; D-tagatose 6-phosphate degradation; D-glyceraldehyde 3-phosphate and glycerone phosphate from D-tagatose 6-phosphate: step 2/2. In terms of biological role, catalytic subunit of the tagatose-1,6-bisphosphate aldolase GatYZ, which catalyzes the reversible aldol condensation of dihydroxyacetone phosphate (DHAP or glycerone-phosphate) with glyceraldehyde 3-phosphate (G3P) to produce tagatose 1,6-bisphosphate (TBP). Requires GatZ subunit for full activity and stability. Is involved in the catabolism of galactitol. This Klebsiella pneumoniae subsp. pneumoniae (strain ATCC 700721 / MGH 78578) protein is D-tagatose-1,6-bisphosphate aldolase subunit GatY.